A 519-amino-acid chain; its full sequence is Probable carboxypeptidase S-like 2 (519 aa).

Residues 25–45 form a helical membrane-spanning segment; the sequence is FNLIKIIIRNLLIGILLMLVL. H151 lines the Zn(2+) pocket. Residue D153 is part of the active site. D184 is a binding site for Zn(2+). The active-site Proton acceptor is the E218. E219, D246, and H490 together coordinate Zn(2+).

Belongs to the peptidase M20A family. Zn(2+) is required as a cofactor.

It is found in the membrane. The chain is Probable carboxypeptidase S-like 2 from Dictyostelium discoideum (Social amoeba).